We begin with the raw amino-acid sequence, 647 residues long: RalBP1-associated Eps domain-containing protein 2 (647 aa).

Residues 21-122 (EQQCYSELFA…RTESIKCELP (102 aa)) form the EH 1 domain. Residues 156 to 233 (EKNSFKRMDN…PSSEGPGAKP (78 aa)) are disordered. Residues 158 to 170 (NSFKRMDNEDKQE) are compositionally biased toward basic and acidic residues. Low complexity predominate over residues 221–230 (PEGPSSEGPG). Position 239 is a phosphoserine (S239). The EH 2 domain occupies 268-359 (QREYYVNQFR…LQPEYLQAAF (92 aa)). Residues 301–336 (LSIPELSYIWELSDADCDGALTLSEFCAAFHLIVAR) form the EF-hand domain. 4 residues coordinate Ca(2+): D314, D316, D318, and E325. A disordered region spans residues 402-478 (PTQDVTTADD…PRPQKTHSRA (77 aa)). T466 is subject to Phosphothreonine. S480 is modified (phosphoserine). The tract at residues 492 to 568 (PAANSGLLPP…PENQTTESQE (77 aa)) is disordered. Over residues 499-510 (LPPPPALPPRPC) the composition is skewed to pro residues. Positions 501–647 (PPPALPPRPC…LEQLRPVTVL (147 aa)) are interaction with RALBP1. The span at 524-539 (SQLNRAPSQAAESSPT) shows a compositional bias: polar residues. Residues 548 to 647 (PPSKPIRRKF…LEQLRPVTVL (100 aa)) form an interaction with ASAP1 region. Residues 599-640 (IQTAIRKNKEANAVLARLNSELQQQLKEVHQERIALENQLEQ) are a coiled coil.

Interacts with EPN1. Interacts with EPS15 AND EPS15L1. Interacts with RALBP1; can form a ternary complex with activated Ral (RALA or RALB). Interacts with ASAP1; the interaction is direct and this complex can bind paxillin. Also forms a ternary complex with RALBP1 and ASAP1. Interacts with GRB2. Post-translationally, tyrosine-phosphorylated upon stimulation of cells with EGF. Phosphorylation on Tyr-residues induces its association with the EGF receptor probably indirectly through an adapter like GRB2.

The protein localises to the cytoplasm. In terms of biological role, involved in ligand-dependent receptor mediated endocytosis of the EGF and insulin receptors as part of the Ral signaling pathway. By controlling growth factor receptors endocytosis may regulate cell survival. Through ASAP1 may regulate cell adhesion and migration. This is RalBP1-associated Eps domain-containing protein 2 (Reps2) from Mus musculus (Mouse).